A 321-amino-acid polypeptide reads, in one-letter code: Probable ATP-dependent 6-phosphofructokinase (321 aa).

Residues G20 and 82 to 83 each bind ATP; that span reads RF. Substrate is bound by residues 136-138, 180-182, E235, R259, and 265-268; these read TID, MGR, and YLQR. D138 serves as the catalytic Proton acceptor.

The protein belongs to the phosphofructokinase type A (PFKA) family. In terms of assembly, homotetramer. Requires Mg(2+) as cofactor.

The protein localises to the cytoplasm. The enzyme catalyses beta-D-fructose 6-phosphate + ATP = beta-D-fructose 1,6-bisphosphate + ADP + H(+). It participates in carbohydrate degradation; glycolysis; D-glyceraldehyde 3-phosphate and glycerone phosphate from D-glucose: step 3/4. Functionally, catalyzes the phosphorylation of D-fructose 6-phosphate to fructose 1,6-bisphosphate by ATP, the first committing step of glycolysis. The chain is Probable ATP-dependent 6-phosphofructokinase (pfkA) from Ureaplasma parvum serovar 3 (strain ATCC 700970).